Consider the following 276-residue polypeptide: MGAPLVALNDGNSIPQVGLGVWQTPPEDTERAVAAALAAGYRHVDTAAAYGNEEQTGRAIAQSGLDRSQVYLVTKLWNSEQGYDATLAAFEASVDRLGVDYLDLYLIHWPVPEKNLFVDTFRAFARLREDGRIRSIGVSNFEPEHLRVLIDSTGIVPAVNQIELHPLLPQRELRELHAQLGIATEAWSPLGQGSLLAHPTVTGVAESHGKTAAQALIRWHMQLGNIVIPKSVNPQRIESNFDVFDFELSEQDMASISSLEDASRLGPDPKTFNFTG.

Tyrosine 50 (proton donor) is an active-site residue. 8 residues coordinate NADPH: leucine 190, isoleucine 228, lysine 230, serine 231, valine 232, arginine 236, serine 239, and asparagine 240.

This sequence belongs to the aldo/keto reductase family.

The polypeptide is Aldo-keto reductase Mjls_1919 (Mycobacterium sp. (strain JLS)).